Reading from the N-terminus, the 209-residue chain is Large ribosomal subunit protein uL3 (209 aa).

Residue Gln150 is modified to N5-methylglutamine.

It belongs to the universal ribosomal protein uL3 family. As to quaternary structure, part of the 50S ribosomal subunit. Forms a cluster with proteins L14 and L19. In terms of processing, methylated by PrmB.

In terms of biological role, one of the primary rRNA binding proteins, it binds directly near the 3'-end of the 23S rRNA, where it nucleates assembly of the 50S subunit. This is Large ribosomal subunit protein uL3 from Vibrio vulnificus (strain CMCP6).